The following is a 638-amino-acid chain: Chaperone protein HtpG (638 aa).

The a; substrate-binding stretch occupies residues 1 to 328; it reads MGDVEELKFS…SSDLPLNISR (328 aa). The segment at 329 to 558 is b; that stretch reads ETLQNNMVIE…EHALDIRMER (230 aa). The segment at 484–508 is disordered; it reads LEKFTEGDDQQSTKKKKEKKDTDDA. The tract at residues 559–638 is c; that stretch reads FLREQKQLSY…NQVLARLFKK (80 aa).

It belongs to the heat shock protein 90 family. As to quaternary structure, homodimer.

It localises to the cytoplasm. Molecular chaperone. Has ATPase activity. The polypeptide is Chaperone protein HtpG (Anaplasma marginale (strain St. Maries)).